Reading from the N-terminus, the 419-residue chain is CinA-like protein (419 aa).

It belongs to the CinA family.

In Leptospira borgpetersenii serovar Hardjo-bovis (strain JB197), this protein is CinA-like protein.